We begin with the raw amino-acid sequence, 348 residues long: Phospho-N-acetylmuramoyl-pentapeptide-transferase (348 aa).

10 consecutive transmembrane segments (helical) span residues 11-31 (SLILFLVTVMGFAFLVGIFLG), 67-87 (TAGGVLFFLVLLMSIFFLLPL), 92-112 (TWLFVFSIVSWGSLGWYDDIV), 128-148 (FIVQLLLSAVTVITVFFIDKE), 163-183 (IFLGSSILAKLFCFSLAMLAI), 198-218 (GLATGITCMSSFGLLIVAIMS), 222-242 (PLAYDVSIVLATLVGISLAFL), 251-271 (VFMGDTGSLLIGGILASCAVM), 276-296 (LFLIFLGGVFVAEAGSVILQV), and 326-346 (VVARFWMAGLLCTVLGIVAAL).

Belongs to the glycosyltransferase 4 family. MraY subfamily. Mg(2+) is required as a cofactor.

It is found in the cell inner membrane. It catalyses the reaction UDP-N-acetyl-alpha-D-muramoyl-L-alanyl-gamma-D-glutamyl-meso-2,6-diaminopimeloyl-D-alanyl-D-alanine + di-trans,octa-cis-undecaprenyl phosphate = di-trans,octa-cis-undecaprenyl diphospho-N-acetyl-alpha-D-muramoyl-L-alanyl-D-glutamyl-meso-2,6-diaminopimeloyl-D-alanyl-D-alanine + UMP. It participates in cell wall biogenesis; peptidoglycan biosynthesis. Catalyzes the initial step of the lipid cycle reactions in the biosynthesis of the cell wall peptidoglycan: transfers peptidoglycan precursor phospho-MurNAc-pentapeptide from UDP-MurNAc-pentapeptide onto the lipid carrier undecaprenyl phosphate, yielding undecaprenyl-pyrophosphoryl-MurNAc-pentapeptide, known as lipid I. The chain is Phospho-N-acetylmuramoyl-pentapeptide-transferase from Chlamydia felis (strain Fe/C-56) (Chlamydophila felis).